The chain runs to 673 residues: MNDQGIKESIETLKEQIRKYDYHYYVLDEPLVPDAEYDRCFKALQQYEEQYPQFLSPDSPTQRVSGTPSDAFMPVAHKQPMLSLSNVFTTDELKAFIKRAIEKLDEPNQQLVFACEPKLDGLAVNMTYEGGILTHAATRGDGAVGENITANIKTIASVPLRLRVSNPPKLIEVRGEVYIPKADFEAYNARARELGEKTFANPRNAAAGSLRQLNPEISASRPLAIYCYGIGACEDYKLPNSHLEQLNLLKEFGFRVSPETRRAVGIEGCLDYYQYMLAKRNQLPFEIDGVVYKIDSISLQQQLGYVSRAPRFACAHKFPATEEMTRLIAVDFQVGRTGAVTPVARLEPVSVGGVTVSNATLHNFDEITRKDIRIGDTVIIRRAGDVIPEVVSVILEKRPANARMIELPKNCPVCGSEVVREADEAIARCVGGLYCKAQLKRMMWHFASRKAMYIEGLGSVLIDQLVDEGIVHHLADLYELDLQTLASLPRMGEKSAKNLLSALEKSKKTTFNRFLYALGIREIGEAGARVLAEHYCDVEGLKAATIEELMTLNDIGPVAASHVVHFFAQAHNLEVIDRLLELGIHWPKSEKIQVNQQNPFFGKTVVLTGTLSTMGREEAKAKLLALGAKVSGSVSSKTDYVVAGSEAGSKLIKATELGVAIIEEDEFLKWVNS.

Residues 34-38, 83-84, and glutamate 116 contribute to the NAD(+) site; these read DAEYD and SL. Lysine 118 serves as the catalytic N6-AMP-lysine intermediate. NAD(+) is bound by residues arginine 139, glutamate 176, lysine 293, and lysine 317. Positions 411, 414, 429, and 435 each coordinate Zn(2+). Positions 595–673 constitute a BRCT domain; that stretch reads NQQNPFFGKT…EDEFLKWVNS (79 aa).

It belongs to the NAD-dependent DNA ligase family. LigA subfamily. The cofactor is Mg(2+). It depends on Mn(2+) as a cofactor.

It catalyses the reaction NAD(+) + (deoxyribonucleotide)n-3'-hydroxyl + 5'-phospho-(deoxyribonucleotide)m = (deoxyribonucleotide)n+m + AMP + beta-nicotinamide D-nucleotide.. Functionally, DNA ligase that catalyzes the formation of phosphodiester linkages between 5'-phosphoryl and 3'-hydroxyl groups in double-stranded DNA using NAD as a coenzyme and as the energy source for the reaction. It is essential for DNA replication and repair of damaged DNA. The polypeptide is DNA ligase (Legionella pneumophila (strain Lens)).